A 262-amino-acid polypeptide reads, in one-letter code: MSRIHPTAIVEPGAQLDESVEVGPYAVIGAHVTIGARTTVGSHSVIEGHTTLGEDNRIGHYASVGGRPQDMKYKDEPTRLVIGNRNTIREFTTIHTGTMQDAGVTTLGDDNWIMAYVHIGHDCHVGSNVILSSNAQMAGHVTIGDHAIVGGMSGVHQFVRIGAHSMLGGASALVQDIPPFVIAAGNKAEPHGINVEGLRRRGFSPDAISALRAAYRVLYKNGLSLEEAKVQLRELATAGGDGDAPVQTLLAFVEASQRGIIR.

It belongs to the transferase hexapeptide repeat family. LpxA subfamily. Homotrimer.

The protein localises to the cytoplasm. The enzyme catalyses a (3R)-hydroxyacyl-[ACP] + UDP-N-acetyl-alpha-D-glucosamine = a UDP-3-O-[(3R)-3-hydroxyacyl]-N-acetyl-alpha-D-glucosamine + holo-[ACP]. It participates in glycolipid biosynthesis; lipid IV(A) biosynthesis; lipid IV(A) from (3R)-3-hydroxytetradecanoyl-[acyl-carrier-protein] and UDP-N-acetyl-alpha-D-glucosamine: step 1/6. Functionally, involved in the biosynthesis of lipid A, a phosphorylated glycolipid that anchors the lipopolysaccharide to the outer membrane of the cell. The polypeptide is Acyl-[acyl-carrier-protein]--UDP-N-acetylglucosamine O-acyltransferase (Paraburkholderia phytofirmans (strain DSM 17436 / LMG 22146 / PsJN) (Burkholderia phytofirmans)).